Consider the following 259-residue polypeptide: Deoxyribose-phosphate aldolase (259 aa).

The active-site Proton donor/acceptor is D102. Residue K167 is the Schiff-base intermediate with acetaldehyde of the active site. The active-site Proton donor/acceptor is the K201.

It belongs to the DeoC/FbaB aldolase family. DeoC type 2 subfamily.

It is found in the cytoplasm. The enzyme catalyses 2-deoxy-D-ribose 5-phosphate = D-glyceraldehyde 3-phosphate + acetaldehyde. Its pathway is carbohydrate degradation; 2-deoxy-D-ribose 1-phosphate degradation; D-glyceraldehyde 3-phosphate and acetaldehyde from 2-deoxy-alpha-D-ribose 1-phosphate: step 2/2. Its function is as follows. Catalyzes a reversible aldol reaction between acetaldehyde and D-glyceraldehyde 3-phosphate to generate 2-deoxy-D-ribose 5-phosphate. The polypeptide is Deoxyribose-phosphate aldolase (Escherichia coli (strain SMS-3-5 / SECEC)).